We begin with the raw amino-acid sequence, 92 residues long: YcgL domain-containing protein VC_1957 (92 aa).

Positions 1–84 (MLCSIYKSPK…PPENLLEQHK (84 aa)) constitute a YcgL domain. The segment at 69 to 92 (FLQLPPPPENLLEQHKERKARQTP) is disordered.

This chain is YcgL domain-containing protein VC_1957, found in Vibrio cholerae serotype O1 (strain ATCC 39315 / El Tor Inaba N16961).